The chain runs to 212 residues: Synaptosomal-associated protein 25 (212 aa).

T-SNARE coiled-coil homology domains are found at residues 26 to 88 (QGVA…LSGM) and 148 to 210 (DARE…AHQL).

Belongs to the SNAP-25 family. Exclusively found in brain and ganglia.

The protein localises to the synapse. It is found in the synaptosome. Functionally, may play an important role in the synaptic function of specific neuronal systems. Associates with proteins involved in vesicle docking and membrane fusion. This Drosophila melanogaster (Fruit fly) protein is Synaptosomal-associated protein 25 (Snap25).